A 758-amino-acid chain; its full sequence is Transmembrane E3 ubiquitin-protein ligase 1 (758 aa).

Positions 1-26 are cleaved as a signal peptide; it reads MEIDGNTLVFIIVILFLFFSSPGGDG. Over 27–398 the chain is Lumenal; the sequence is VSSQYEFNQL…YELKIMSIRK (372 aa). A helical membrane pass occupies residues 399–419; sequence HLLFGIALFAAQIYLLLTQMH. Residues 420-431 are Cytoplasmic-facing; that stretch reads HTNTPSMVNKIS. A helical membrane pass occupies residues 432 to 452; sequence FYCFSMINLVDGSLATLYFVA. The Lumenal segment spans residues 453–458; the sequence is ASVVPE. A helical transmembrane segment spans residues 459 to 479; the sequence is LYLPLVISAFSCFILASIFEI. Residues 480–523 lie on the Cytoplasmic side of the membrane; it reads RYLISIYASQVNEQNVGIINLLRGNTGTYDENRPRPAFIPDEGS. The helical transmembrane segment at 524-544 threads the bilayer; that stretch reads IGGSLYGRFFFMLIIFTFLIL. Residues 545–553 lie on the Lumenal side of the membrane; that stretch reads SSTSWPRQL. Residues 554-574 traverse the membrane as a helical segment; the sequence is RMVFEYILIFILNSYWIPQIF. The Cytoplasmic segment spans residues 575–602; the sequence is RNAVKGIPSRRERARSSIGGNRSQNKMP. Residues 603–623 form a helical membrane-spanning segment; that stretch reads LLWSFVIGTTIIRSLPVVYVF. The Lumenal portion of the chain corresponds to 624-635; sequence TYSSNVFRHHKD. Residues 636–656 traverse the membrane as a helical segment; sequence VHFVVFLSLWLLFQISILYSQ. At 657 to 758 the chain is on the cytoplasmic side; sequence DVLGSRWFLP…PVCRSPLPPL (102 aa). The segment at 699–752 adopts an RING-type; atypical zinc-finger fold; sequence CAICMSDVPIYIEEIPETHKVDQHSYMVTPCNHVFHTSCLENWMNYKLQCPVCR.

As to quaternary structure, component of the DSC E3 ligase complexes composed of at least TUL1, DSC2, DSC3, UBX3, CDC48 as well as VLD1 for the vacuole-localized complex or GLD1 for the Golgi/endosome-localized complex. Interacts with UBC4.

The protein localises to the golgi apparatus membrane. It catalyses the reaction S-ubiquitinyl-[E2 ubiquitin-conjugating enzyme]-L-cysteine + [acceptor protein]-L-lysine = [E2 ubiquitin-conjugating enzyme]-L-cysteine + N(6)-ubiquitinyl-[acceptor protein]-L-lysine.. The protein operates within protein modification; protein ubiquitination. Functionally, catalytic component of the DSC E3 ubiquitin ligase complexes that tag proteins present in Golgi, endosome and vacuole membranes and function in protein homeostasis under non-stress conditions and support a role in protein quality control. Mediates ubiquitination of vacuolar proteins such as CPS1, PPN1, PEP12 and other proteins containing exposed hydrophilic residues within their transmembrane domains, leading to their sorting into internal vesicles in late endosomes. Targets also the unpalmitoylated endosomal SNARE TLG1 to the MVB pathway. The protein is Transmembrane E3 ubiquitin-protein ligase 1 (TUL1) of Saccharomyces cerevisiae (strain ATCC 204508 / S288c) (Baker's yeast).